Here is a 187-residue protein sequence, read N- to C-terminus: Elongation factor P (187 aa).

The protein belongs to the elongation factor P family.

The protein resides in the cytoplasm. It functions in the pathway protein biosynthesis; polypeptide chain elongation. Involved in peptide bond synthesis. Stimulates efficient translation and peptide-bond synthesis on native or reconstituted 70S ribosomes in vitro. Probably functions indirectly by altering the affinity of the ribosome for aminoacyl-tRNA, thus increasing their reactivity as acceptors for peptidyl transferase. This Synechococcus sp. (strain CC9311) protein is Elongation factor P.